The following is a 148-amino-acid chain: uncharacterized protein (148 aa).

A helical membrane pass occupies residues 7–29 (MLILMSLVKIVLTCLPTGVIEWL).

It localises to the membrane. This is an uncharacterized protein from Bacillus subtilis (strain 168).